Reading from the N-terminus, the 67-residue chain is MPKMKTKSSAKKRFKVTASGKIKVAAAGKRHGMIKRSNKFIRDARGTMVLCEQDAKKVIQHYLPNGL.

It belongs to the bacterial ribosomal protein bL35 family.

This chain is Large ribosomal subunit protein bL35, found in Bartonella tribocorum (strain CIP 105476 / IBS 506).